The chain runs to 507 residues: Maturase K (507 aa).

Belongs to the intron maturase 2 family. MatK subfamily.

The protein resides in the plastid. It is found in the chloroplast. Its function is as follows. Usually encoded in the trnK tRNA gene intron. Probably assists in splicing its own and other chloroplast group II introns. In Ranunculus acris (Meadow buttercup), this protein is Maturase K.